A 118-amino-acid polypeptide reads, in one-letter code: Protein TusC (118 aa).

Belongs to the DsrF/TusC family. As to quaternary structure, heterohexamer, formed by a dimer of trimers. The hexameric TusBCD complex contains 2 copies each of TusB, TusC and TusD. The TusBCD complex interacts with TusE.

Its subcellular location is the cytoplasm. Functionally, part of a sulfur-relay system required for 2-thiolation of 5-methylaminomethyl-2-thiouridine (mnm(5)s(2)U) at tRNA wobble positions. In Salmonella agona (strain SL483), this protein is Protein TusC.